A 118-amino-acid polypeptide reads, in one-letter code: BolA-like protein 3 (118 aa).

The protein belongs to the BolA/IbaG family. As to quaternary structure, interacts with NFU1.

It localises to the mitochondrion matrix. In terms of biological role, acts as a mitochondrial iron-sulfur (Fe-S) cluster assembly factor that facilitates [4Fe-4S] cluster insertion into a subset of mitochondrial proteins such as lipoyl synthase (LS) and succinate dehydrogenase (SDH). Required during the last step of iron-sulfur protein assembly when the iron-sulfur cluster is inserted into the target protein. Acts together with NFU1, later than BOL1 and GRX5 in the [4Fe-4S] cluster insertion process. Not required for [2Fe-2S] cluster insertion into mitochondrial proteins. This Saccharomyces cerevisiae (strain ATCC 204508 / S288c) (Baker's yeast) protein is BolA-like protein 3.